Reading from the N-terminus, the 185-residue chain is Large ribosomal subunit protein uL5 (185 aa).

The protein belongs to the universal ribosomal protein uL5 family. Part of the 50S ribosomal subunit; part of the 5S rRNA/L5/L18/L25 subcomplex. Contacts the 5S rRNA and the P site tRNA. Forms a bridge to the 30S subunit in the 70S ribosome.

Its function is as follows. This is one of the proteins that bind and probably mediate the attachment of the 5S RNA into the large ribosomal subunit, where it forms part of the central protuberance. In the 70S ribosome it contacts protein S13 of the 30S subunit (bridge B1b), connecting the 2 subunits; this bridge is implicated in subunit movement. Contacts the P site tRNA; the 5S rRNA and some of its associated proteins might help stabilize positioning of ribosome-bound tRNAs. This Rhizobium johnstonii (strain DSM 114642 / LMG 32736 / 3841) (Rhizobium leguminosarum bv. viciae) protein is Large ribosomal subunit protein uL5.